The following is an 801-amino-acid chain: Leucine--tRNA ligase (801 aa).

Positions 40 to 51 match the 'HIGH' region motif; that stretch reads PYPSGAGLHVGH. The 'KMSKS' region motif lies at 576–580; the sequence is KMSKS. Residue K579 participates in ATP binding.

The protein belongs to the class-I aminoacyl-tRNA synthetase family.

It localises to the cytoplasm. It catalyses the reaction tRNA(Leu) + L-leucine + ATP = L-leucyl-tRNA(Leu) + AMP + diphosphate. This is Leucine--tRNA ligase from Exiguobacterium sibiricum (strain DSM 17290 / CCUG 55495 / CIP 109462 / JCM 13490 / 255-15).